The chain runs to 241 residues: GDSL esterase/lipase At5g45920 (241 aa).

The Nucleophile role is filled by S12. Residues D189 and H192 contribute to the active site.

It belongs to the 'GDSL' lipolytic enzyme family.

This Arabidopsis thaliana (Mouse-ear cress) protein is GDSL esterase/lipase At5g45920.